The chain runs to 65 residues: Large ribosomal subunit protein bL35 (65 aa).

Positions 1–26 (MPKIKTVRGAAKRFKKTASGGFKRKQ) are disordered. Residues 10–26 (AAKRFKKTASGGFKRKQ) show a composition bias toward basic residues.

The protein belongs to the bacterial ribosomal protein bL35 family.

The polypeptide is Large ribosomal subunit protein bL35 (Mannheimia succiniciproducens (strain KCTC 0769BP / MBEL55E)).